Here is a 393-residue protein sequence, read N- to C-terminus: Chorismate synthase (393 aa).

Residues R40 and R46 each contribute to the NADP(+) site. FMN contacts are provided by residues 129–131 (RSS), 249–250 (QA), G301, 316–320 (KPIPT), and R342.

This sequence belongs to the chorismate synthase family. Homotetramer. FMNH2 is required as a cofactor.

The catalysed reaction is 5-O-(1-carboxyvinyl)-3-phosphoshikimate = chorismate + phosphate. It participates in metabolic intermediate biosynthesis; chorismate biosynthesis; chorismate from D-erythrose 4-phosphate and phosphoenolpyruvate: step 7/7. Functionally, catalyzes the anti-1,4-elimination of the C-3 phosphate and the C-6 proR hydrogen from 5-enolpyruvylshikimate-3-phosphate (EPSP) to yield chorismate, which is the branch point compound that serves as the starting substrate for the three terminal pathways of aromatic amino acid biosynthesis. This reaction introduces a second double bond into the aromatic ring system. In Pelobacter propionicus (strain DSM 2379 / NBRC 103807 / OttBd1), this protein is Chorismate synthase.